We begin with the raw amino-acid sequence, 727 residues long: 1,4-alpha-glucan branching enzyme GlgB (727 aa).

Aspartate 405 serves as the catalytic Nucleophile. The active-site Proton donor is glutamate 458.

This sequence belongs to the glycosyl hydrolase 13 family. GlgB subfamily. Monomer.

It catalyses the reaction Transfers a segment of a (1-&gt;4)-alpha-D-glucan chain to a primary hydroxy group in a similar glucan chain.. It functions in the pathway glycan biosynthesis; glycogen biosynthesis. Catalyzes the formation of the alpha-1,6-glucosidic linkages in glycogen by scission of a 1,4-alpha-linked oligosaccharide from growing alpha-1,4-glucan chains and the subsequent attachment of the oligosaccharide to the alpha-1,6 position. The polypeptide is 1,4-alpha-glucan branching enzyme GlgB (Yersinia enterocolitica serotype O:8 / biotype 1B (strain NCTC 13174 / 8081)).